The following is a 486-amino-acid chain: Glutamyl-tRNA(Gln) amidotransferase subunit A (486 aa).

Active-site charge relay system residues include Lys-79 and Ser-154. The active-site Acyl-ester intermediate is the Ser-178.

It belongs to the amidase family. GatA subfamily. As to quaternary structure, heterotrimer of A, B and C subunits.

The enzyme catalyses L-glutamyl-tRNA(Gln) + L-glutamine + ATP + H2O = L-glutaminyl-tRNA(Gln) + L-glutamate + ADP + phosphate + H(+). Allows the formation of correctly charged Gln-tRNA(Gln) through the transamidation of misacylated Glu-tRNA(Gln) in organisms which lack glutaminyl-tRNA synthetase. The reaction takes place in the presence of glutamine and ATP through an activated gamma-phospho-Glu-tRNA(Gln). The protein is Glutamyl-tRNA(Gln) amidotransferase subunit A of Dehalococcoides mccartyi (strain ATCC BAA-2100 / JCM 16839 / KCTC 5957 / BAV1).